The primary structure comprises 77 residues: uncharacterized protein (77 aa).

A helical transmembrane segment spans residues Phe-36–Val-52.

Its subcellular location is the membrane. This is an uncharacterized protein from Saccharomyces cerevisiae (strain ATCC 204508 / S288c) (Baker's yeast).